A 309-amino-acid chain; its full sequence is Foldase protein PrsA (309 aa).

The first 20 residues, Met1–Ala20, serve as a signal peptide directing secretion. Cys21 is lipidated: N-palmitoyl cysteine. Residue Cys21 is the site of S-diacylglycerol cysteine attachment. Residues Thr144–Ser241 form the PpiC domain.

It belongs to the PrsA family.

The protein resides in the cell membrane. The enzyme catalyses [protein]-peptidylproline (omega=180) = [protein]-peptidylproline (omega=0). In terms of biological role, plays a major role in protein secretion by helping the post-translocational extracellular folding of several secreted proteins. In Streptococcus gordonii (strain Challis / ATCC 35105 / BCRC 15272 / CH1 / DL1 / V288), this protein is Foldase protein PrsA.